A 548-amino-acid chain; its full sequence is Glutamate--tRNA ligase (548 aa).

The 'HIGH' region motif lies at 102–112 (PSPSGPLHIGH).

Belongs to the class-I aminoacyl-tRNA synthetase family. Glutamate--tRNA ligase type 2 subfamily.

It is found in the cytoplasm. The enzyme catalyses tRNA(Glu) + L-glutamate + ATP = L-glutamyl-tRNA(Glu) + AMP + diphosphate. Functionally, catalyzes the attachment of glutamate to tRNA(Glu) in a two-step reaction: glutamate is first activated by ATP to form Glu-AMP and then transferred to the acceptor end of tRNA(Glu). The sequence is that of Glutamate--tRNA ligase from Thermoplasma acidophilum (strain ATCC 25905 / DSM 1728 / JCM 9062 / NBRC 15155 / AMRC-C165).